We begin with the raw amino-acid sequence, 33 residues long: Photosystem II reaction center protein Psb30 (33 aa).

The helical transmembrane segment at 5-25 threads the bilayer; the sequence is LIVQLGSLTLITLAGPLVVVL.

The protein belongs to the Psb30/Ycf12 family. In terms of assembly, PSII is composed of 1 copy each of membrane proteins PsbA, PsbB, PsbC, PsbD, PsbE, PsbF, PsbH, PsbI, PsbJ, PsbK, PsbL, PsbM, PsbT, PsbY, PsbZ, Psb30/Ycf12, peripheral proteins of the oxygen-evolving complex and a large number of cofactors. It forms dimeric complexes.

It is found in the plastid. The protein resides in the chloroplast thylakoid membrane. A core subunit of photosystem II (PSII), probably helps stabilize the reaction center. The sequence is that of Photosystem II reaction center protein Psb30 from Euglena deses.